Consider the following 1343-residue polypeptide: DNA-directed RNA polymerase subunit beta (1343 aa).

The protein belongs to the RNA polymerase beta chain family. In terms of assembly, the RNAP catalytic core consists of 2 alpha, 1 beta, 1 beta' and 1 omega subunit. When a sigma factor is associated with the core the holoenzyme is formed, which can initiate transcription.

The enzyme catalyses RNA(n) + a ribonucleoside 5'-triphosphate = RNA(n+1) + diphosphate. Functionally, DNA-dependent RNA polymerase catalyzes the transcription of DNA into RNA using the four ribonucleoside triphosphates as substrates. This is DNA-directed RNA polymerase subunit beta from Shewanella denitrificans (strain OS217 / ATCC BAA-1090 / DSM 15013).